The following is a 241-amino-acid chain: DNA repair protein RecO (241 aa).

It belongs to the RecO family.

Its function is as follows. Involved in DNA repair and RecF pathway recombination. The sequence is that of DNA repair protein RecO from Ruegeria sp. (strain TM1040) (Silicibacter sp.).